The sequence spans 297 residues: ATP synthase gamma chain (297 aa).

The protein belongs to the ATPase gamma chain family. As to quaternary structure, F-type ATPases have 2 components, CF(1) - the catalytic core - and CF(0) - the membrane proton channel. CF(1) has five subunits: alpha(3), beta(3), gamma(1), delta(1), epsilon(1). CF(0) has three main subunits: a, b and c.

Its subcellular location is the cell membrane. Its function is as follows. Produces ATP from ADP in the presence of a proton gradient across the membrane. The gamma chain is believed to be important in regulating ATPase activity and the flow of protons through the CF(0) complex. This chain is ATP synthase gamma chain, found in Arthrobacter sp. (strain FB24).